The following is a 166-amino-acid chain: Small ribosomal subunit protein uS5 (166 aa).

One can recognise an S5 DRBM domain in the interval tyrosine 12 to valine 75.

The protein belongs to the universal ribosomal protein uS5 family. As to quaternary structure, part of the 30S ribosomal subunit. Contacts proteins S4 and S8.

Its function is as follows. With S4 and S12 plays an important role in translational accuracy. Functionally, located at the back of the 30S subunit body where it stabilizes the conformation of the head with respect to the body. This Pseudomonas fluorescens (strain Pf0-1) protein is Small ribosomal subunit protein uS5.